Consider the following 765-residue polypeptide: Putative maltooligosyl trehalose synthase (765 aa).

It belongs to the glycosyl hydrolase 13 family. In terms of assembly, monomer.

The catalysed reaction is 4-[(1-&gt;4)-alpha-D-glucosyl](n-1)-D-glucose = 1-[(1-&gt;4)-alpha-D-glucosyl](n-1)-alpha-D-glucose. Functionally, catalyzes the conversion of maltooligosaccharide into the non-reducing saccharide, maltooligosyl trehalose (alpha-maltooligosyl alpha-D-glucoside) by intramolecular transglycosylation. This chain is Putative maltooligosyl trehalose synthase (treY), found in Mycobacterium tuberculosis (strain CDC 1551 / Oshkosh).